A 198-amino-acid polypeptide reads, in one-letter code: FMN-dependent NADH:quinone oxidoreductase (198 aa).

Residue 96-99 (MYNF) coordinates FMN.

Belongs to the azoreductase type 1 family. As to quaternary structure, homodimer. It depends on FMN as a cofactor.

The catalysed reaction is 2 a quinone + NADH + H(+) = 2 a 1,4-benzosemiquinone + NAD(+). It catalyses the reaction N,N-dimethyl-1,4-phenylenediamine + anthranilate + 2 NAD(+) = 2-(4-dimethylaminophenyl)diazenylbenzoate + 2 NADH + 2 H(+). Quinone reductase that provides resistance to thiol-specific stress caused by electrophilic quinones. Its function is as follows. Also exhibits azoreductase activity. Catalyzes the reductive cleavage of the azo bond in aromatic azo compounds to the corresponding amines. In Burkholderia mallei (strain ATCC 23344), this protein is FMN-dependent NADH:quinone oxidoreductase.